A 313-amino-acid polypeptide reads, in one-letter code: Small ribosomal subunit protein uS2 (313 aa).

Residues 228 to 256 (RQEDKAAEAQDKDAQDTEDNKGARPRGAE) show a composition bias toward basic and acidic residues. Residues 228 to 313 (RQEDKAAEAQ…VSKAGDKPKK (86 aa)) are disordered.

Belongs to the universal ribosomal protein uS2 family.

In Amoebophilus asiaticus (strain 5a2), this protein is Small ribosomal subunit protein uS2.